Here is a 365-residue protein sequence, read N- to C-terminus: Class I histocompatibility antigen, Gogo-A*0101 alpha chain (365 aa).

A signal peptide spans 1-24; it reads MAVMAPRTLVLLLSGALALTQTWA. Residues 25 to 114 form an alpha-1 region; sequence GSHSMRYFST…LRGYYNQSED (90 aa). Over 25-308 the chain is Extracellular; the sequence is GSHSMRYFST…EPSSQPTIPI (284 aa). N-linked (GlcNAc...) asparagine glycosylation is present at Asn-110. Positions 115 to 206 are alpha-2; the sequence is GSHTIQRMYG…ENGKETLQRT (92 aa). 2 disulfides stabilise this stretch: Cys-125/Cys-188 and Cys-227/Cys-283. The alpha-3 stretch occupies residues 207–298; the sequence is DAPKTHMTHH…GLPEPLTLRW (92 aa). The region spanning 209–297 is the Ig-like C1-type domain; sequence PKTHMTHHAV…EGLPEPLTLR (89 aa). Residues 299–308 are connecting peptide; the sequence is EPSSQPTIPI. The chain crosses the membrane as a helical span at residues 309–332; the sequence is VGIIAGLVLFGAVIAGAVVAAVRW. Residues 333–365 are Cytoplasmic-facing; it reads RRKSSDRKGGSYSQAASSDSAQGSDVSLTACKV. A disordered region spans residues 338-365; sequence DRKGGSYSQAASSDSAQGSDVSLTACKV. A compositionally biased stretch (low complexity) spans 342–359; the sequence is GSYSQAASSDSAQGSDVS. Ser-343 is subject to Phosphoserine. The residue at position 344 (Tyr-344) is a Phosphotyrosine. Phosphoserine is present on residues Ser-345, Ser-349, Ser-350, Ser-352, Ser-356, and Ser-359.

It belongs to the MHC class I family. Heterodimer of an alpha chain and a beta chain (beta-2-microglobulin).

The protein resides in the membrane. Its function is as follows. Involved in the presentation of foreign antigens to the immune system. This is Class I histocompatibility antigen, Gogo-A*0101 alpha chain from Gorilla gorilla gorilla (Western lowland gorilla).